The primary structure comprises 150 residues: MVRLAIVVAEFNYDITQLMLQKAVEHAKFLGAEITYIVKTPGVYDIPMILKELVAKEEVDAVATLGAVIQGATKHDELVATQAARKILDIAVESGKPITLGIIGHGANRIQALERVEEYARRAVEAAVKMARRKKALREAKYNGSTVYID.

Residues Phe11, 43 to 45, and 67 to 69 contribute to the 5-amino-6-(D-ribitylamino)uracil site; these read VYD and AVI. 72 to 73 contributes to the (2S)-2-hydroxy-3-oxobutyl phosphate binding site; it reads AT. His75 (proton donor) is an active-site residue. Leu100 lines the 5-amino-6-(D-ribitylamino)uracil pocket. (2S)-2-hydroxy-3-oxobutyl phosphate is bound at residue Arg115.

It belongs to the DMRL synthase family.

It catalyses the reaction (2S)-2-hydroxy-3-oxobutyl phosphate + 5-amino-6-(D-ribitylamino)uracil = 6,7-dimethyl-8-(1-D-ribityl)lumazine + phosphate + 2 H2O + H(+). It participates in cofactor biosynthesis; riboflavin biosynthesis; riboflavin from 2-hydroxy-3-oxobutyl phosphate and 5-amino-6-(D-ribitylamino)uracil: step 1/2. Catalyzes the formation of 6,7-dimethyl-8-ribityllumazine by condensation of 5-amino-6-(D-ribitylamino)uracil with 3,4-dihydroxy-2-butanone 4-phosphate. This is the penultimate step in the biosynthesis of riboflavin. The chain is 6,7-dimethyl-8-ribityllumazine synthase from Pyrobaculum aerophilum (strain ATCC 51768 / DSM 7523 / JCM 9630 / CIP 104966 / NBRC 100827 / IM2).